The sequence spans 94 residues: Large ribosomal subunit protein bL28 (94 aa).

It belongs to the bacterial ribosomal protein bL28 family.

The polypeptide is Large ribosomal subunit protein bL28 (Maricaulis maris (strain MCS10) (Caulobacter maris)).